Reading from the N-terminus, the 203-residue chain is Ribonuclease HII (203 aa).

The RNase H type-2 domain maps to 15–201 (LLVAGLDEAG…VAQAPLRFPE (187 aa)). Positions 21, 22, and 111 each coordinate a divalent metal cation.

This sequence belongs to the RNase HII family. Mn(2+) serves as cofactor. It depends on Mg(2+) as a cofactor.

It is found in the cytoplasm. It carries out the reaction Endonucleolytic cleavage to 5'-phosphomonoester.. Functionally, endonuclease that specifically degrades the RNA of RNA-DNA hybrids. The protein is Ribonuclease HII of Thermus thermophilus (strain ATCC 27634 / DSM 579 / HB8).